A 218-amino-acid polypeptide reads, in one-letter code: uncharacterized protein (218 aa).

5 helical membrane-spanning segments follow: residues isoleucine 28–leucine 48, phenylalanine 66–leucine 86, leucine 92–leucine 112, methionine 122–cysteine 142, and isoleucine 173–phenylalanine 193.

It localises to the cell membrane. This is an uncharacterized protein from Haemophilus influenzae (strain ATCC 51907 / DSM 11121 / KW20 / Rd).